A 39-amino-acid polypeptide reads, in one-letter code: Phospholipase A2 (39 aa).

Ca(2+)-binding residues include Trp-10, Gly-12, and Gly-14. The cysteines at positions 11 and 33 are disulfide-linked. His-36 is an active-site residue. Residue Asp-37 coordinates Ca(2+).

Ca(2+) is required as a cofactor. Expressed uniformly in tentacles (at protein level).

The protein resides in the secreted. The protein localises to the nematocyst. The catalysed reaction is a 1,2-diacyl-sn-glycero-3-phosphocholine + H2O = a 1-acyl-sn-glycero-3-phosphocholine + a fatty acid + H(+). With respect to regulation, inhibited by morin and p-BPB. PA2 catalyzes the calcium-dependent hydrolysis of the 2-acyl groups in 3-sn-phosphoglycerides. Induces insulin secretion in isolated rat islets under high glucose concentration conditions, but not under low glucose concentration conditions. Increases perfusion pressure, renal vascular resistance, urinary flow, glomerular filtration rate, and potassium, sodium, and chloride excretion levels in rat kidney. Does not increase perfusion pressure in the rat mesenteric vascular bed. The polypeptide is Phospholipase A2 (Bunodosoma caissarum (Sea anemone)).